Here is a 495-residue protein sequence, read N- to C-terminus: Lanosterol 14-alpha demethylase erg11 (495 aa).

Residues 2–22 (AFSLVSILLSIALAWYVGYII) form a helical membrane-spanning segment. Position 442 (Cys442) interacts with heme.

Belongs to the cytochrome P450 family. Interacts with dap1. Heme is required as a cofactor.

The protein resides in the endoplasmic reticulum. Its subcellular location is the membrane. It carries out the reaction a 14alpha-methyl steroid + 3 reduced [NADPH--hemoprotein reductase] + 3 O2 = a Delta(14) steroid + formate + 3 oxidized [NADPH--hemoprotein reductase] + 4 H2O + 4 H(+). The catalysed reaction is a 14alpha-methyl steroid + reduced [NADPH--hemoprotein reductase] + O2 = a 14alpha-hydroxymethyl steroid + oxidized [NADPH--hemoprotein reductase] + H2O + H(+). The enzyme catalyses a 14alpha-hydroxymethyl steroid + reduced [NADPH--hemoprotein reductase] + O2 = a 14alpha-formyl steroid + oxidized [NADPH--hemoprotein reductase] + 2 H2O + H(+). It catalyses the reaction a 14alpha-formyl steroid + reduced [NADPH--hemoprotein reductase] + O2 = a Delta(14) steroid + formate + oxidized [NADPH--hemoprotein reductase] + H2O + 2 H(+). It carries out the reaction lanosterol + 3 reduced [NADPH--hemoprotein reductase] + 3 O2 = 4,4-dimethyl-5alpha-cholesta-8,14,24-trien-3beta-ol + formate + 3 oxidized [NADPH--hemoprotein reductase] + 4 H2O + 4 H(+). The catalysed reaction is lanosterol + reduced [NADPH--hemoprotein reductase] + O2 = 32-hydroxylanosterol + oxidized [NADPH--hemoprotein reductase] + H2O + H(+). The enzyme catalyses 32-hydroxylanosterol + reduced [NADPH--hemoprotein reductase] + O2 = 32-oxolanosterol + oxidized [NADPH--hemoprotein reductase] + 2 H2O + H(+). It catalyses the reaction 32-oxolanosterol + reduced [NADPH--hemoprotein reductase] + O2 = 4,4-dimethyl-5alpha-cholesta-8,14,24-trien-3beta-ol + formate + oxidized [NADPH--hemoprotein reductase] + H2O + 2 H(+). It carries out the reaction eburicol + 3 reduced [NADPH--hemoprotein reductase] + 3 O2 = 14-demethyleburicol + formate + 3 oxidized [NADPH--hemoprotein reductase] + 4 H2O + 4 H(+). The catalysed reaction is eburicol + reduced [NADPH--hemoprotein reductase] + O2 = 32-hydroxyeburicol + oxidized [NADPH--hemoprotein reductase] + H2O + H(+). The enzyme catalyses 32-hydroxyeburicol + reduced [NADPH--hemoprotein reductase] + O2 = 32-oxoeburicol + oxidized [NADPH--hemoprotein reductase] + 2 H2O + H(+). It catalyses the reaction 32-oxoeburicol + reduced [NADPH--hemoprotein reductase] + O2 = 14-demethyleburicol + formate + oxidized [NADPH--hemoprotein reductase] + H2O + 2 H(+). It participates in steroid biosynthesis; zymosterol biosynthesis; zymosterol from lanosterol: step 1/6. Its pathway is steroid metabolism; ergosterol biosynthesis. Sterol 14alpha-demethylase that plays a critical role in the third module of ergosterol biosynthesis pathway, being ergosterol the major sterol component in fungal membranes that participates in a variety of functions. The third module or late pathway involves the ergosterol synthesis itself through consecutive reactions that mainly occur in the endoplasmic reticulum (ER) membrane. In filamentous fungi, during the initial step of this module, lanosterol (lanosta-8,24-dien-3beta-ol) can be metabolized to eburicol. Sterol 14alpha-demethylase catalyzes the three-step oxidative removal of the 14alpha-methyl group (C-32) of both these sterols in the form of formate, and converts eburicol and lanosterol to 14-demethyleburicol (4,4,24-trimethylergosta-8,14,24(28)-trienol) and 4,4-dimethyl-5alpha-cholesta-8,14,24-trien-3beta-ol, respectively, which are further metabolized by other enzymes in the pathway to ergosterol. Can also use substrates not intrinsic to fungi, such as 24,25-dihydrolanosterol (DHL), producing 4,4-dimethyl-8,14-cholestadien-3-beta-ol, but at lower rates than the endogenous substrates. The protein is Lanosterol 14-alpha demethylase erg11 of Schizosaccharomyces pombe (strain 972 / ATCC 24843) (Fission yeast).